The following is a 218-amino-acid chain: 1-Cys peroxiredoxin PER1 (218 aa).

The Thioredoxin domain maps to 4-164; it reads LTIGDTVPNL…VVRAVDSLLT (161 aa). Cys46 serves as the catalytic Cysteine sulfenic acid (-SOH) intermediate. A Bipartite nuclear localization signal motif is present at residues 194 to 217; it reads KKMFPQGFETADLPSKKGYLRFTK.

This sequence belongs to the peroxiredoxin family. Prx6 subfamily. As to expression, embryo and aleurone cells.

It localises to the nucleus. Its subcellular location is the cytoplasm. The enzyme catalyses a hydroperoxide + [thioredoxin]-dithiol = an alcohol + [thioredoxin]-disulfide + H2O. In terms of biological role, thiol-specific peroxidase that catalyzes the reduction of hydrogen peroxide and organic hydroperoxides to water and alcohols, respectively. Seems to contribute to the inhibition of germination during stress. This is 1-Cys peroxiredoxin PER1 (PER1) from Hordeum vulgare (Barley).